Reading from the N-terminus, the 24-residue chain is Positive regulator of RepFIC repA1 expression (24 aa).

This Escherichia coli (strain K12) protein is Positive regulator of RepFIC repA1 expression (repL).